The sequence spans 166 residues: NAD(P)H-quinone oxidoreductase subunit I, chloroplastic (166 aa).

4Fe-4S ferredoxin-type domains lie at 55 to 84 (GRIH…VDWK) and 95 to 124 (LNYS…MTEE). [4Fe-4S] cluster contacts are provided by C64, C67, C70, C74, C104, C107, C110, and C114.

This sequence belongs to the complex I 23 kDa subunit family. As to quaternary structure, NDH is composed of at least 16 different subunits, 5 of which are encoded in the nucleus. [4Fe-4S] cluster is required as a cofactor.

Its subcellular location is the plastid. The protein localises to the chloroplast thylakoid membrane. The catalysed reaction is a plastoquinone + NADH + (n+1) H(+)(in) = a plastoquinol + NAD(+) + n H(+)(out). The enzyme catalyses a plastoquinone + NADPH + (n+1) H(+)(in) = a plastoquinol + NADP(+) + n H(+)(out). Functionally, NDH shuttles electrons from NAD(P)H:plastoquinone, via FMN and iron-sulfur (Fe-S) centers, to quinones in the photosynthetic chain and possibly in a chloroplast respiratory chain. The immediate electron acceptor for the enzyme in this species is believed to be plastoquinone. Couples the redox reaction to proton translocation, and thus conserves the redox energy in a proton gradient. In Silphium perfoliatum (Cup plant), this protein is NAD(P)H-quinone oxidoreductase subunit I, chloroplastic.